The following is a 365-amino-acid chain: Outer capsid protein sigma-3 (365 aa).

The CCHC-type zinc finger occupies 51 to 73; the sequence is CMHCLGVVGSLQRKLKHLPHHRC.

Belongs to the orthoreovirus sigma-3 protein family. In terms of assembly, heterohexamer of three sigma-3 and three Mu-1 proteins. The RNA-binding form is probably a homodimer. In terms of processing, cleaved during virus the endosomal proteolytic disassembly of the outer capsid.

It localises to the virion. Its subcellular location is the host cytoplasm. It is found in the host nucleus. Its function is as follows. Stimulates translation by blocking the activation of the dsRNA-dependent protein kinase EIF2AK2/PKR, thereby inhibiting the host interferon response. Sigma3 prevents the activation of EIF2AK2 by competing with the kinase for dsRNA-binding. Functionally, the viral outer shell polypeptides, of which sigma-3 is one, impose structural constraints that prevent elongation of nascent transcripts by the RNA-dependent RNA polymerase lambda-3. The chain is Outer capsid protein sigma-3 (S4) from Reovirus type 3 (strain Dearing) (T3D).